The primary structure comprises 294 residues: 4-diphosphocytidyl-2-C-methyl-D-erythritol kinase (294 aa).

Lys-23 is an active-site residue. Residue 106-116 (PMGGGLGGGSS) participates in ATP binding. Asp-148 is an active-site residue.

This sequence belongs to the GHMP kinase family. IspE subfamily.

The enzyme catalyses 4-CDP-2-C-methyl-D-erythritol + ATP = 4-CDP-2-C-methyl-D-erythritol 2-phosphate + ADP + H(+). Its pathway is isoprenoid biosynthesis; isopentenyl diphosphate biosynthesis via DXP pathway; isopentenyl diphosphate from 1-deoxy-D-xylulose 5-phosphate: step 3/6. In terms of biological role, catalyzes the phosphorylation of the position 2 hydroxy group of 4-diphosphocytidyl-2C-methyl-D-erythritol. In Nitrosospira multiformis (strain ATCC 25196 / NCIMB 11849 / C 71), this protein is 4-diphosphocytidyl-2-C-methyl-D-erythritol kinase.